A 586-amino-acid chain; its full sequence is Glutathione hydrolase 5 proenzyme (586 aa).

Topologically, residues 1–8 (MARGYGAT) are cytoplasmic. The chain crosses the membrane as a helical; Signal-anchor for type II membrane protein span at residues 9 to 29 (VSLVLLGLGLALAVIVLAVVL). Residues 30-586 (SRHQAPCGPQ…LRKSGEAAGY (557 aa)) lie on the Extracellular side of the membrane. N98 carries an N-linked (GlcNAc...) asparagine glycan. Residue R110 coordinates L-glutamate. N-linked (GlcNAc...) asparagine glycans are attached at residues N204, N303, and N347. The active-site Nucleophile is the T388. L-glutamate-binding positions include T406, E427, and 469–470 (SS). 2 N-linked (GlcNAc...) asparagine glycosylation sites follow: N535 and N550.

It belongs to the gamma-glutamyltransferase family. In terms of assembly, heterodimer composed of the light and heavy chains. The active site is located in the light chain. In terms of processing, cleaved by autocatalysis into a large and a small subunit. Post-translationally, glycosylated. Expressed in follicular dendritic cells in lymphoid follicles (at protein level).

It localises to the membrane. The enzyme catalyses glutathione + H2O = L-cysteinylglycine + L-glutamate. It catalyses the reaction an S-substituted glutathione + H2O = an S-substituted L-cysteinylglycine + L-glutamate. It carries out the reaction leukotriene C4 + H2O = leukotriene D4 + L-glutamate. The catalysed reaction is S-[(2E,6E,10E)-geranylgeranyl]-L-glutathione + H2O = S-[(2E,6E,10E)-geranylgeranyl]-L-cysteinylglycine + L-glutamate. The enzyme catalyses an N-terminal (5-L-glutamyl)-[peptide] + an alpha-amino acid = 5-L-glutamyl amino acid + an N-terminal L-alpha-aminoacyl-[peptide]. Its pathway is sulfur metabolism; glutathione metabolism. It functions in the pathway lipid metabolism; leukotriene D4 biosynthesis. Inhibited by serine-borate. Cleaves the gamma-glutamyl bond of extracellular glutathione tripeptide (gamma-Glu-Cys-Gly) and certain glutathione conjugates. Hydrolyzes glutathione releasing L-Glu and Cys-Gly dipeptide which is further metabolized to maintain extracellular cysteine levels but also to provide cysteine necessary for intracellular glutathione synthesis. Among glutathione-S-conjugates metabolizes leukotriene C4 (LTC4) and S-geranylgeranyl-glutathione (GGG), but is inactive toward gamma-glutamyl leucine. Converts extracellular LTC4 to LTD4 during acute inflammatory response. Acts as a negative regulator of GGG bioactivity. GGT5 (via GGG catabolism) and ABCC1 (via extracellular transport) establish GGG gradients within lymphoid tissues to position P2RY8-positive lymphocytes at germinal centers in lymphoid follicles and restrict their chemotactic transmigration from blood vessels to bone marrow parenchyma. The transpeptidation reaction, i.e. the transfer of gamma-glutamyl moiety to an acceptor molecule to yield a new gamma-glutamyl compound requires high concentration of dipeptide acceptor and is considered nonphysiological. The sequence is that of Glutathione hydrolase 5 proenzyme (GGT5) from Homo sapiens (Human).